The primary structure comprises 201 residues: Small ribosomal subunit protein uS4B (201 aa).

The region spanning 93–156 (QRLDTVVYRL…RSLAVVRESL (64 aa)) is the S4 RNA-binding domain.

The protein belongs to the universal ribosomal protein uS4 family. Part of the 30S ribosomal subunit. Contacts protein S5. The interaction surface between S4 and S5 is involved in control of translational fidelity.

Functionally, one of the primary rRNA binding proteins, it binds directly to 16S rRNA where it nucleates assembly of the body of the 30S subunit. Its function is as follows. With S5 and S12 plays an important role in translational accuracy. This chain is Small ribosomal subunit protein uS4B, found in Symbiobacterium thermophilum (strain DSM 24528 / JCM 14929 / IAM 14863 / T).